A 125-amino-acid chain; its full sequence is Small ribosomal subunit protein uS12m (125 aa).

It belongs to the universal ribosomal protein uS12 family.

The protein resides in the mitochondrion. Its function is as follows. Protein S12 is involved in the translation initiation step. The polypeptide is Small ribosomal subunit protein uS12m (RPS12) (Helianthus annuus (Common sunflower)).